We begin with the raw amino-acid sequence, 814 residues long: Phenylalanine--tRNA ligase beta subunit (814 aa).

The tRNA-binding domain maps to Ser39–Ala153. Residues Ala414–Ala498 enclose the B5 domain. Residues Asp476, Asp482, Glu485, and Glu486 each contribute to the Mg(2+) site. The 94-residue stretch at Pro720–Arg813 folds into the FDX-ACB domain.

This sequence belongs to the phenylalanyl-tRNA synthetase beta subunit family. Type 1 subfamily. Tetramer of two alpha and two beta subunits. It depends on Mg(2+) as a cofactor.

Its subcellular location is the cytoplasm. The catalysed reaction is tRNA(Phe) + L-phenylalanine + ATP = L-phenylalanyl-tRNA(Phe) + AMP + diphosphate + H(+). The chain is Phenylalanine--tRNA ligase beta subunit from Parasynechococcus marenigrum (strain WH8102).